The sequence spans 180 residues: ATP synthase subunit delta (180 aa).

Belongs to the ATPase delta chain family. As to quaternary structure, F-type ATPases have 2 components, F(1) - the catalytic core - and F(0) - the membrane proton channel. F(1) has five subunits: alpha(3), beta(3), gamma(1), delta(1), epsilon(1). F(0) has three main subunits: a(1), b(2) and c(10-14). The alpha and beta chains form an alternating ring which encloses part of the gamma chain. F(1) is attached to F(0) by a central stalk formed by the gamma and epsilon chains, while a peripheral stalk is formed by the delta and b chains.

The protein localises to the cell inner membrane. F(1)F(0) ATP synthase produces ATP from ADP in the presence of a proton or sodium gradient. F-type ATPases consist of two structural domains, F(1) containing the extramembraneous catalytic core and F(0) containing the membrane proton channel, linked together by a central stalk and a peripheral stalk. During catalysis, ATP synthesis in the catalytic domain of F(1) is coupled via a rotary mechanism of the central stalk subunits to proton translocation. Its function is as follows. This protein is part of the stalk that links CF(0) to CF(1). It either transmits conformational changes from CF(0) to CF(1) or is implicated in proton conduction. The polypeptide is ATP synthase subunit delta (Paracidovorax citrulli (strain AAC00-1) (Acidovorax citrulli)).